The following is a 274-amino-acid chain: Coagulation factor IX (274 aa).

The residue at position 23 (Tyr23) is a Sulfotyrosine. N-linked (GlcNAc...) asparagine glycosylation is present at Asn25. Phosphoserine is present on Ser26. Asn35 carries an N-linked (GlcNAc...) asparagine glycan. The O-linked (GalNAc...) threonine glycan is linked to Thr37. Residue Asn40 is glycosylated (N-linked (GlcNAc...) asparagine). The 226-residue stretch at 49–274 folds into the Peptidase S1 domain; the sequence is VVGGEDAARG…IYTKVSRYEV (226 aa). Cysteines 74 and 90 form a disulfide. Catalysis depends on His89, which acts as the Charge relay system. Residues Glu103, Asn105, Glu110, and Glu113 each coordinate Ca(2+). A glycan (N-linked (GlcNAc...) asparagine) is linked at Asn128. Asp137 (charge relay system) is an active-site residue. 2 disulfide bridges follow: Cys204-Cys218 and Cys229-Cys257. Ser233 serves as the catalytic Charge relay system.

Belongs to the peptidase S1 family. In terms of assembly, heterodimer of a light chain and a heavy chain; disulfide-linked. Interacts (inactive and activated) with F11 (activated) in calcium-dependent manner. Interacts with SERPINC1. Activated by factor XIa, which excises the activation peptide. The propeptide can also be removed by snake venom protease. Activated by coagulation factor VIIa-tissue factor (F7-F3) complex in calcium-dependent manner.

It localises to the secreted. The enzyme catalyses Selective cleavage of Arg-|-Ile bond in factor X to form factor Xa.. Functionally, factor IX is a vitamin K-dependent plasma protein that participates in the intrinsic pathway of blood coagulation by converting factor X to its active form in the presence of Ca(2+) ions, phospholipids, and factor VIIIa. In Ovis aries (Sheep), this protein is Coagulation factor IX (F9).